The sequence spans 110 residues: UPF0060 membrane protein Ping_0587 (110 aa).

Transmembrane regions (helical) follow at residues 6–26 (IFGI…LPYL), 33–53 (SIWL…LLTL), 61–81 (TYAA…WLVE), and 87–107 (MTDL…MFGP).

This sequence belongs to the UPF0060 family.

It is found in the cell inner membrane. The chain is UPF0060 membrane protein Ping_0587 from Psychromonas ingrahamii (strain DSM 17664 / CCUG 51855 / 37).